Here is a 356-residue protein sequence, read N- to C-terminus: Dual-specificity RNA methyltransferase RlmN (356 aa).

Glu89 functions as the Proton acceptor in the catalytic mechanism. The Radical SAM core domain maps to 108–341 (SHARYTICVS…CTIRESKGLD (234 aa)). Cys115 and Cys346 are oxidised to a cystine. Cys122, Cys126, and Cys129 together coordinate [4Fe-4S] cluster. Residues 172-173 (GE), Ser204, 227-229 (SLH), and Asn303 contribute to the S-adenosyl-L-methionine site. The active-site S-methylcysteine intermediate is the Cys346.

Belongs to the radical SAM superfamily. RlmN family. It depends on [4Fe-4S] cluster as a cofactor.

Its subcellular location is the cytoplasm. The catalysed reaction is adenosine(2503) in 23S rRNA + 2 reduced [2Fe-2S]-[ferredoxin] + 2 S-adenosyl-L-methionine = 2-methyladenosine(2503) in 23S rRNA + 5'-deoxyadenosine + L-methionine + 2 oxidized [2Fe-2S]-[ferredoxin] + S-adenosyl-L-homocysteine. The enzyme catalyses adenosine(37) in tRNA + 2 reduced [2Fe-2S]-[ferredoxin] + 2 S-adenosyl-L-methionine = 2-methyladenosine(37) in tRNA + 5'-deoxyadenosine + L-methionine + 2 oxidized [2Fe-2S]-[ferredoxin] + S-adenosyl-L-homocysteine. In terms of biological role, specifically methylates position 2 of adenine 2503 in 23S rRNA and position 2 of adenine 37 in tRNAs. m2A2503 modification seems to play a crucial role in the proofreading step occurring at the peptidyl transferase center and thus would serve to optimize ribosomal fidelity. This chain is Dual-specificity RNA methyltransferase RlmN, found in Campylobacter jejuni subsp. jejuni serotype O:2 (strain ATCC 700819 / NCTC 11168).